The following is a 260-amino-acid chain: Indole-3-glycerol phosphate synthase (260 aa).

It belongs to the TrpC family.

The enzyme catalyses 1-(2-carboxyphenylamino)-1-deoxy-D-ribulose 5-phosphate + H(+) = (1S,2R)-1-C-(indol-3-yl)glycerol 3-phosphate + CO2 + H2O. Its pathway is amino-acid biosynthesis; L-tryptophan biosynthesis; L-tryptophan from chorismate: step 4/5. In Lacticaseibacillus paracasei (strain ATCC 334 / BCRC 17002 / CCUG 31169 / CIP 107868 / KCTC 3260 / NRRL B-441) (Lactobacillus paracasei), this protein is Indole-3-glycerol phosphate synthase.